The following is a 444-amino-acid chain: Gentisate transporter (444 aa).

12 helical membrane passes run alanine 42–valine 64, leucine 79–serine 101, alanine 108–alanine 127, tryptophan 131–alanine 153, alanine 166–valine 188, tryptophan 198–isoleucine 220, tryptophan 252–tryptophan 274, alanine 289–glycine 311, arginine 318–valine 340, tyrosine 344–alanine 366, leucine 378–leucine 400, and phenylalanine 410–leucine 428.

It belongs to the major facilitator superfamily. Aromatic acid:H(+) symporter (AAHS) (TC 2.A.1.15) family.

Its subcellular location is the cell membrane. Functionally, transport of gentisate (2,5-dihydroxybenzoate) into the cell. Does not transport 3-hydroxybenzoate or benzoate. The protein is Gentisate transporter (genK) of Corynebacterium glutamicum (strain ATCC 13032 / DSM 20300 / JCM 1318 / BCRC 11384 / CCUG 27702 / LMG 3730 / NBRC 12168 / NCIMB 10025 / NRRL B-2784 / 534).